The chain runs to 138 residues: MMTMFEEVEVEAYVYPTEDIRKVKKAMLNLIPGLQFEAFDKGEYVILVGRTKDKRALQRLYELFRGQQILDTARMMLEEGYFGEEIIIKVHKQVAYVGKVNFNEDSPLGPITITIRTKEPQKLMKWLAPRTKDGVPIE.

It belongs to the UPF0201 family.

This Pyrococcus horikoshii (strain ATCC 700860 / DSM 12428 / JCM 9974 / NBRC 100139 / OT-3) protein is UPF0201 protein PH1010.